The sequence spans 204 residues: MNPSNNPKKTRHQSHMPQERDETKKEKKLLHRNIERQRRQEMAILFASLRSQLPLKYIKGKRAMSDHVNGAVSFIKDTQTRIKDLSARRDELKREIGDPTSLTGSGSGSGSSRSEPASVMVQPCVSGFEVVVSSLASGLEAWPLSRVLEVLHGQGLEVISSLTARVNERLMYTIQVEVNSFDCFDLAWLQQKLIEQLVLSTTRH.

Disordered stretches follow at residues Met-1–Lys-27 and Lys-93–Pro-116. The 53-residue stretch at Glu-26–Thr-78 folds into the bHLH domain.

As to quaternary structure, homodimer.

The protein resides in the nucleus. The chain is Transcription factor bHLH120 (BHLH120) from Arabidopsis thaliana (Mouse-ear cress).